Reading from the N-terminus, the 197-residue chain is Protein jagunal (197 aa).

At Met1–Tyr39 the chain is on the cytoplasmic side. A helical transmembrane segment spans residues Cys40–Leu60. Topologically, residues Asp61 to Pro78 are lumenal. Residues Leu79 to Ala99 traverse the membrane as a helical segment. Residues Arg100–Lys109 lie on the Cytoplasmic side of the membrane. Residues Tyr110–Phe130 traverse the membrane as a helical segment. Topologically, residues Ser131–Gly159 are lumenal. The helical transmembrane segment at Val160–Ala180 threads the bilayer. The Cytoplasmic segment spans residues Tyr181–Gln197.

Belongs to the jagunal family.

It is found in the endoplasmic reticulum membrane. In terms of biological role, required for endoplasmic reticulum organization and proper vesicular traffic during vitellogenesis. Required for oocyte and bristle growth. This chain is Protein jagunal, found in Drosophila melanogaster (Fruit fly).